Consider the following 809-residue polypeptide: Ferric-pyoverdine BN7/BN8 receptor (809 aa).

Positions 1-45 (MNHTARKRQGWQRSVSQKLAGAVVQGIACMGASAPLLLMPAWATA) are cleaved as a signal peptide. In terms of domain architecture, TBDR plug spans 166–273 (TPRETPQSLT…PSATINLIRK (108 aa)). Positions 278 to 809 (EAQASITGEA…NVMTSFKYSF (532 aa)) constitute a TBDR beta-barrel domain. The TonB C-terminal box signature appears at 792 to 809 (YGVYGTPRNVMTSFKYSF).

The protein belongs to the TonB-dependent receptor family.

The protein resides in the cell outer membrane. Its function is as follows. Specific receptor for the siderophores ferric pyoverdines (pseudobactins) BN8 and BN7, iron chelating molecules that allow the organism to extract iron from the environment, especially under iron-restricted conditions. The sequence is that of Ferric-pyoverdine BN7/BN8 receptor (pupB) from Pseudomonas putida (Arthrobacter siderocapsulatus).